The primary structure comprises 136 residues: Mitochondrial pyruvate carrier 1-like protein (136 aa).

At Ala-2–Glu-19 the chain is on the mitochondrial matrix side. The helical transmembrane segment at Phe-20–Ala-42 threads the bilayer. Over Phe-43–Glu-51 the chain is Mother cell cytoplasmic. The chain crosses the membrane as a helical span at residues Ile-52–Arg-74. The Mitochondrial matrix segment spans residues Val-75–Ser-136. Residues Glu-111–Ser-136 form a disordered region. Positions Pro-117–Ser-136 are enriched in low complexity.

It belongs to the mitochondrial pyruvate carrier (MPC) (TC 2.A.105) family.

The protein resides in the mitochondrion inner membrane. The enzyme catalyses pyruvate(out) + H(+)(out) = pyruvate(in) + H(+)(in). In terms of biological role, mediates the uptake of pyruvate into mitochondria. The sequence is that of Mitochondrial pyruvate carrier 1-like protein (MPC1L) from Homo sapiens (Human).